The following is a 485-amino-acid chain: Rhamnulokinase (485 aa).

Position 12–16 (A12–R16) interacts with ATP. Residues G80 and H238–T240 each bind substrate. D239 functions as the Proton acceptor in the catalytic mechanism. Residue T261 coordinates ATP. Residue N298 participates in substrate binding. E306 contacts ATP. C355 and C372 are disulfide-bonded. An ATP-binding site is contributed by G404.

This sequence belongs to the rhamnulokinase family. Requires Mg(2+) as cofactor.

The catalysed reaction is L-rhamnulose + ATP = L-rhamnulose 1-phosphate + ADP + H(+). It functions in the pathway carbohydrate degradation; L-rhamnose degradation; glycerone phosphate from L-rhamnose: step 2/3. Involved in the catabolism of L-rhamnose (6-deoxy-L-mannose). Catalyzes the transfer of the gamma-phosphate group from ATP to the 1-hydroxyl group of L-rhamnulose to yield L-rhamnulose 1-phosphate. This chain is Rhamnulokinase, found in Bacteroides thetaiotaomicron (strain ATCC 29148 / DSM 2079 / JCM 5827 / CCUG 10774 / NCTC 10582 / VPI-5482 / E50).